We begin with the raw amino-acid sequence, 263 residues long: Small ribosomal subunit protein uS2m (263 aa).

Residues 1–15 (MLSRKLSPEQLVARR) constitute a mitochondrion transit peptide.

It belongs to the universal ribosomal protein uS2 family. Component of the mitochondrial small ribosomal subunit (mt-SSU). Mature yeast 74S mitochondrial ribosomes consist of a small (37S) and a large (54S) subunit. The 37S small subunit contains a 15S ribosomal RNA (15S mt-rRNA) and at least 32 different proteins. The 54S large subunit contains a 21S rRNA (21S mt-rRNA) and at least 45 different proteins.

It localises to the mitochondrion. In terms of biological role, component of the mitochondrial ribosome (mitoribosome), a dedicated translation machinery responsible for the synthesis of mitochondrial genome-encoded proteins, including at least some of the essential transmembrane subunits of the mitochondrial respiratory chain. The mitoribosomes are attached to the mitochondrial inner membrane and translation products are cotranslationally integrated into the membrane. This Schizosaccharomyces pombe (strain 972 / ATCC 24843) (Fission yeast) protein is Small ribosomal subunit protein uS2m.